The sequence spans 215 residues: Large ribosomal subunit protein uL3 (215 aa).

The segment at 136-155 is disordered; it reads GVSISHRSHGSTGQRQDPGK. At Gln-151 the chain carries N5-methylglutamine.

Belongs to the universal ribosomal protein uL3 family. As to quaternary structure, part of the 50S ribosomal subunit. Forms a cluster with proteins L14 and L19. Methylated by PrmB.

In terms of biological role, one of the primary rRNA binding proteins, it binds directly near the 3'-end of the 23S rRNA, where it nucleates assembly of the 50S subunit. The protein is Large ribosomal subunit protein uL3 of Rickettsia conorii (strain ATCC VR-613 / Malish 7).